The primary structure comprises 795 residues: MLRHMHRSGVQPFRQRLLPWVQSIAVPRSNRVQPSAIRHVRSWSNIPFITVPLSRAHGKPFAHRSELKHAKRIVVKLGSAVVTRGDECGLALGRLASIVEQVSVLQNQGREMMLVTSGAVAFGKQRLRHEILLSQSVRQALHSGQNHLKEMAIPVLEARACAAAGQSGLMALYEAMFTQYSICAAQILVTNLDFHDEQKRRNLNGTLHELLRMNIVPIVNTNDAVVPPAEPNSDLQGVNVISVKDNDSLAARLAVEMKTDLLIVLSDVEGLFDSPPGSDDAKLIDIFYPGDQQSVTFGTKSRVGLGGMEAKVKAALWALQGGTSVVIANGTHPKVSGHVITDIVEGKKVGTFFSEVKPAGPTVEQQGEMARSGGRMLATLEPEQRAEIINHLADLLTDQREEILLANKKDLEEAEGRLASPLLKRLSLSTSKLNSLAIGLRQIAASSQESVGRVLRRTRIAKNLELEQVTVPIGVLLVIFESRPDCLPQVAALAIASGNGLLLKGGKEAAHSNRILHLLTQEALSIHGVKEAIQLVNTREEVEDLCRLDKIIDLIIPRGSSQLVRDIQKAAKGIPVMGHSEGICHMYVDSEASVDKVTRLVRDSKCEYPAACNALETLLIHRDLLRTPLFDQIIDMLRVEQVKIHAGPKFASYLTFSPSEVKSLRTEYGDLEVCIEVVDSVQEAIDHIHKYGSSHTDVIVTENEKTAEFFLQHVDSACVFWNASTRFSDGYRFGLGAEVGISTSRIHARGPVGLEGLLTTKWLLRGQDHVVSDFSEHGSLKYLHENLPVPQRNFS.

The segment at Met1 to Pro361 is glutamate 5-kinase. Positions 117, 223, and 246 each coordinate substrate. Residues Ser266 to Asp267 and Leu305 to Lys311 each bind ATP. N6-succinyllysine is present on residues Lys311, Lys347, and Lys550. The interval Thr362–Ser795 is gamma-glutamyl phosphate reductase.

In the N-terminal section; belongs to the glutamate 5-kinase family. The protein in the C-terminal section; belongs to the gamma-glutamyl phosphate reductase family. Can form homodimers/multimers.

The protein localises to the mitochondrion matrix. The enzyme catalyses L-glutamate + ATP = L-glutamyl 5-phosphate + ADP. It catalyses the reaction L-glutamate 5-semialdehyde + phosphate + NADP(+) = L-glutamyl 5-phosphate + NADPH + H(+). It functions in the pathway amino-acid biosynthesis; L-proline biosynthesis; L-glutamate 5-semialdehyde from L-glutamate: step 1/2. It participates in amino-acid biosynthesis; L-proline biosynthesis; L-glutamate 5-semialdehyde from L-glutamate: step 2/2. Isoform Short: Inhibited by L-ornithine with a Ki of approximately 0.25 mm. Isoform Long: Insensitive to ornithine inhibition. Thus, the two amino acid insert in the long isoform abolishes feedback inhibition of P5CS activity by L-ornithine. Functionally, bifunctional enzyme that converts glutamate to glutamate 5-semialdehyde, an intermediate in the biosynthesis of proline, ornithine and arginine. This chain is Delta-1-pyrroline-5-carboxylate synthase (Aldh18a1), found in Mus musculus (Mouse).